The following is a 395-amino-acid chain: Ribosomal RNA large subunit methyltransferase G (395 aa).

This sequence belongs to the methyltransferase superfamily. RlmG family.

Its subcellular location is the cytoplasm. It carries out the reaction guanosine(1835) in 23S rRNA + S-adenosyl-L-methionine = N(2)-methylguanosine(1835) in 23S rRNA + S-adenosyl-L-homocysteine + H(+). Functionally, specifically methylates the guanine in position 1835 (m2G1835) of 23S rRNA. The polypeptide is Ribosomal RNA large subunit methyltransferase G (Yersinia pestis (strain Pestoides F)).